The chain runs to 399 residues: S-adenosylmethionine synthase (399 aa).

His17 lines the ATP pocket. Asp19 serves as a coordination point for Mg(2+). Position 45 (Glu45) interacts with K(+). Glu58 and Gln101 together coordinate L-methionine. Positions 101–111 (QSADIAMGVDQ) are flexible loop. ATP contacts are provided by residues 177–179 (DGK), 244–245 (RF), Asp253, 259–260 (RK), Ala276, and Lys280. Asp253 lines the L-methionine pocket. Lys284 provides a ligand contact to L-methionine.

Belongs to the AdoMet synthase family. In terms of assembly, homotetramer; dimer of dimers. The cofactor is Mg(2+). It depends on K(+) as a cofactor.

Its subcellular location is the cytoplasm. It catalyses the reaction L-methionine + ATP + H2O = S-adenosyl-L-methionine + phosphate + diphosphate. It participates in amino-acid biosynthesis; S-adenosyl-L-methionine biosynthesis; S-adenosyl-L-methionine from L-methionine: step 1/1. Catalyzes the formation of S-adenosylmethionine (AdoMet) from methionine and ATP. The overall synthetic reaction is composed of two sequential steps, AdoMet formation and the subsequent tripolyphosphate hydrolysis which occurs prior to release of AdoMet from the enzyme. This is S-adenosylmethionine synthase from Bacillus anthracis (strain A0248).